The following is a 98-amino-acid chain: Integration host factor subunit beta (98 aa).

Belongs to the bacterial histone-like protein family. Heterodimer of an alpha and a beta chain.

Functionally, this protein is one of the two subunits of integration host factor, a specific DNA-binding protein that functions in genetic recombination as well as in transcriptional and translational control. This is Integration host factor subunit beta from Marinobacter nauticus (strain ATCC 700491 / DSM 11845 / VT8) (Marinobacter aquaeolei).